We begin with the raw amino-acid sequence, 313 residues long: Ribosomal RNA small subunit methyltransferase I (313 aa).

Residues 1–23 (MASIQLARTTRGGDGVARADGTR) form a disordered region.

This sequence belongs to the methyltransferase superfamily. RsmI family.

It localises to the cytoplasm. It catalyses the reaction cytidine(1402) in 16S rRNA + S-adenosyl-L-methionine = 2'-O-methylcytidine(1402) in 16S rRNA + S-adenosyl-L-homocysteine + H(+). Functionally, catalyzes the 2'-O-methylation of the ribose of cytidine 1402 (C1402) in 16S rRNA. This chain is Ribosomal RNA small subunit methyltransferase I, found in Micromonospora olivasterospora.